The primary structure comprises 98 residues: NADH-ubiquinone oxidoreductase chain 4L (98 aa).

Transmembrane regions (helical) follow at residues 1–21 (MTMV…GLLM), 29–49 (SLLC…VTIL), and 61–81 (IVLL…LVMV).

Belongs to the complex I subunit 4L family. In terms of assembly, core subunit of respiratory chain NADH dehydrogenase (Complex I) which is composed of 45 different subunits.

Its subcellular location is the mitochondrion inner membrane. It catalyses the reaction a ubiquinone + NADH + 5 H(+)(in) = a ubiquinol + NAD(+) + 4 H(+)(out). Its function is as follows. Core subunit of the mitochondrial membrane respiratory chain NADH dehydrogenase (Complex I) which catalyzes electron transfer from NADH through the respiratory chain, using ubiquinone as an electron acceptor. Part of the enzyme membrane arm which is embedded in the lipid bilayer and involved in proton translocation. The protein is NADH-ubiquinone oxidoreductase chain 4L (MT-ND4L) of Monachus monachus (Mediterranean monk seal).